The primary structure comprises 534 residues: Bifunctional pantoate ligase/cytidylate kinase (534 aa).

The segment at 1-302 (MRLLTTVAAL…LGSTRLIDNT (302 aa)) is pantoate--beta-alanine ligase. 48-55 (MGSLHQGH) serves as a coordination point for ATP. Catalysis depends on His55, which acts as the Proton donor. Gln79 serves as a coordination point for (R)-pantoate. Gln79 provides a ligand contact to beta-alanine. Residue 172–175 (GQKD) coordinates ATP. Residue Gln178 participates in (R)-pantoate binding. Residues Val201 and 209–212 (CSSR) each bind ATP. Positions 303–534 (ILRDRQPIIA…DYYQQRLSQW (232 aa)) are cytidylate kinase.

The protein in the N-terminal section; belongs to the pantothenate synthetase family. It in the C-terminal section; belongs to the cytidylate kinase family. Type 1 subfamily.

The protein localises to the cytoplasm. The catalysed reaction is (R)-pantoate + beta-alanine + ATP = (R)-pantothenate + AMP + diphosphate + H(+). It carries out the reaction CMP + ATP = CDP + ADP. It catalyses the reaction dCMP + ATP = dCDP + ADP. It functions in the pathway cofactor biosynthesis; (R)-pantothenate biosynthesis; (R)-pantothenate from (R)-pantoate and beta-alanine: step 1/1. Its function is as follows. Catalyzes the condensation of pantoate with beta-alanine in an ATP-dependent reaction via a pantoyl-adenylate intermediate. Functionally, catalyzes the transfer of a phosphate group from ATP to either CMP or dCMP to form CDP or dCDP and ADP, respectively. The protein is Bifunctional pantoate ligase/cytidylate kinase of Nostoc sp. (strain PCC 7120 / SAG 25.82 / UTEX 2576).